A 147-amino-acid polypeptide reads, in one-letter code: Plasminogen receptor (KT) (147 aa).

Residues 1–52 (MGFIFSKSMNESMKNQKEFMLMNARLQLERQLIMQSEMRERQMAMQIAWSRE) are Extracellular-facing. The helical transmembrane segment at 53 to 73 (FLKYFGTFFGLAAISLTAGAI) threads the bilayer. Over 74–78 (KKKKP) the chain is Cytoplasmic. A helical transmembrane segment spans residues 79–99 (AFLVPIVPLSFILTYQYDLGY). At 100-147 (GTLLERMKGEAEDILETEKSKLQLPRGMITFESIEKARKEQSRFFIDK) the chain is on the extracellular side.

Interacts with PLAT and PLAUR. Expressed in peripheral blood cells and monocytes. Expressed in adrenal medulla.

It is found in the cell membrane. In terms of biological role, receptor for plasminogen. Regulates urokinase plasminogen activator-dependent and stimulates tissue-type plasminogen activator-dependent cell surface plasminogen activation. Proposed to be part of a local catecholaminergic cell plasminogen activation system that regulates neuroendocrine prohormone processing. Involved in regulation of inflammatory response; regulates monocyte chemotactic migration and matrix metalloproteinase activation, such as of MMP2 and MMP9. In Homo sapiens (Human), this protein is Plasminogen receptor (KT) (PLGRKT).